Here is a 237-residue protein sequence, read N- to C-terminus: Proteasome subunit alpha type-5 (237 aa).

The protein belongs to the peptidase T1A family. The 26S proteasome consists of a 20S proteasome core and two 19S regulatory subunits. The 20S proteasome core is composed of 28 subunits that are arranged in four stacked rings, resulting in a barrel-shaped structure. The two end rings are each formed by seven alpha subunits, and the two central rings are each formed by seven beta subunits. The catalytic chamber with the active sites is on the inside of the barrel.

The protein localises to the cytoplasm. It is found in the nucleus. In terms of biological role, the proteasome is a multicatalytic proteinase complex which is characterized by its ability to cleave peptides with Arg, Phe, Tyr, Leu, and Glu adjacent to the leaving group at neutral or slightly basic pH. The proteasome has an ATP-dependent proteolytic activity. This chain is Proteasome subunit alpha type-5 (PAE1), found in Oryza sativa subsp. japonica (Rice).